The following is a 194-amino-acid chain: Aminodeoxychorismate/anthranilate synthase component 2 (194 aa).

One can recognise a Glutamine amidotransferase type-1 domain in the interval 1–194 (MILMIDNYDS…IETYRKEVIA (194 aa)). Active-site residues include Cys-79, His-168, and Glu-170.

As to quaternary structure, monomer. Heterodimer consisting of two non-identical subunits: a glutamine amidotransferase subunit (PabA) and a aminodeoxychorismate synthase subunit (PabB).

The catalysed reaction is chorismate + L-glutamine = anthranilate + pyruvate + L-glutamate + H(+). It catalyses the reaction chorismate + L-glutamine = 4-amino-4-deoxychorismate + L-glutamate. The protein operates within amino-acid biosynthesis; L-tryptophan biosynthesis; L-tryptophan from chorismate: step 1/5. Its pathway is cofactor biosynthesis; tetrahydrofolate biosynthesis; 4-aminobenzoate from chorismate: step 1/2. In terms of biological role, part of a heterodimeric complex that catalyzes the two-step biosynthesis of 4-amino-4-deoxychorismate (ADC), a precursor of p-aminobenzoate (PABA) and tetrahydrofolate. In the first step, a glutamine amidotransferase (PabA) generates ammonia as a substrate that, along with chorismate, is used in the second step, catalyzed by aminodeoxychorismate synthase (PabB) to produce ADC. PabA converts glutamine into glutamate only in the presence of stoichiometric amounts of PabB. Also involved in the biosynthesis of anthranilate. Complements a glutamine amidotransferase-negative mutant. This Bacillus subtilis (strain 168) protein is Aminodeoxychorismate/anthranilate synthase component 2.